A 508-amino-acid chain; its full sequence is Probable monogalactosyldiacylglycerol synthase 3, chloroplastic (508 aa).

The N-terminal 60 residues, 1-60 (MAASSSSSSSMASPRGRSIRETVLETVAAYHQQQRMRRKFRKSLSYAGELSSAGRARGEG), are a transit peptide targeting the chloroplast. The interval 51–79 (SSAGRARGEGGASSSASTTSLCGPDEDDE) is disordered.

Belongs to the glycosyltransferase 28 family.

The protein resides in the plastid. It is found in the chloroplast membrane. It catalyses the reaction a 1,2-diacyl-sn-glycerol + UDP-alpha-D-galactose = a 1,2-diacyl-3-O-(beta-D-galactosyl)-sn-glycerol + UDP + H(+). Functionally, involved in the synthesis of the major structural component of photosynthetic membranes. The polypeptide is Probable monogalactosyldiacylglycerol synthase 3, chloroplastic (MGD3) (Oryza sativa subsp. japonica (Rice)).